The sequence spans 32 residues: MSDINATRLPHLVRYPPYVGDGTDLTLNRGEK.

Residues 1-10 constitute a propeptide that is removed on maturation; sequence MSDINATRLP. The segment at residues 11-17 is a cross-link (cyclopeptide (His-Pro)); sequence HLVRYPP. A propeptide spanning residues 18–32 is cleaved from the precursor; sequence YVGDGTDLTLNRGEK.

The protein belongs to the MSDIN fungal toxin family. Post-translationally, processed by the macrocyclase-peptidase enzyme POPB to yield a toxic cyclic heptapeptide. POPB first removes 10 residues from the N-terminus. Conformational trapping of the remaining peptide forces the enzyme to release this intermediate rather than proceed to macrocyclization. The enzyme rebinds the remaining peptide in a different conformation and catalyzes macrocyclization of the N-terminal 7 residues.

Its function is as follows. Probable toxin that belongs to the MSDIN-like toxin family responsible for a large number of food poisoning cases and deaths. The protein is MSDIN-like toxin proprotein 2 of Amanita fuligineoides.